We begin with the raw amino-acid sequence, 270 residues long: Protein-ADP-ribose hydrolase (270 aa).

Residues 73-267 (VSVKDCQKTN…LYDTYLQKEN (195 aa)) enclose the Macro domain. ADP-D-ribose is bound by residues D92, I93, and N106. Zn(2+) contacts are provided by C112, H117, and C119. ADP-D-ribose-binding residues include C119, I120, D121, S212, T213, G214, E215, and F216.

It belongs to the MacroD-type family. Zn-Macro subfamily. As to quaternary structure, monomer. Interacts with the lipoylated form of GcvH-L. It depends on Zn(2+) as a cofactor.

The catalysed reaction is 4-O-(ADP-D-ribosyl)-L-aspartyl-[protein] + H2O = L-aspartyl-[protein] + ADP-D-ribose + H(+). It carries out the reaction 5-O-(ADP-D-ribosyl)-L-glutamyl-[protein] + H2O = L-glutamyl-[protein] + ADP-D-ribose + H(+). The enzyme catalyses S-(ADP-D-ribosyl)-L-cysteinyl-[protein] + H2O = ADP-D-ribose + L-cysteinyl-[protein]. In terms of biological role, ADP-ribosylhydrolase that specifically reverses the SirTM-mediated mono-ADP-ribosylation at an asparatate residue of GcvH-L (SpyM50867), by releasing ADP-ribose from the target protein. May play a role in the regulation of the response to host-induced oxidative stress. It can also hydrolyze ADP-ribosyl-glutamate bonds and ADP-ribosyl-cysteine bonds. In vitro, it can remove the ADP-ribosyl modification from the human mono-ADP-ribosylated PARP1 E988Q mutant, which is primarily modified on glutamate site with only minor aspartate contribution. It can also hydrolyze the ADP-ribosyl-cysteinyl glycosidic bond of a Cys-ADP-ribosylated synthetic peptide. The polypeptide is Protein-ADP-ribose hydrolase (Streptococcus pyogenes serotype M5 (strain Manfredo)).